A 153-amino-acid chain; its full sequence is Transcription antitermination protein NusB (153 aa).

This sequence belongs to the NusB family.

Its function is as follows. Involved in transcription antitermination. Required for transcription of ribosomal RNA (rRNA) genes. Binds specifically to the boxA antiterminator sequence of the ribosomal RNA (rrn) operons. This Fusobacterium nucleatum subsp. nucleatum (strain ATCC 25586 / DSM 15643 / BCRC 10681 / CIP 101130 / JCM 8532 / KCTC 2640 / LMG 13131 / VPI 4355) protein is Transcription antitermination protein NusB.